Consider the following 224-residue polypeptide: 7-cyano-7-deazaguanine synthase (224 aa).

8-18 (LSGGMDSAAVI) contributes to the ATP binding site. Residues Cys186, Cys196, Cys199, and Cys202 each coordinate Zn(2+).

Belongs to the QueC family. Zn(2+) is required as a cofactor.

It catalyses the reaction 7-carboxy-7-deazaguanine + NH4(+) + ATP = 7-cyano-7-deazaguanine + ADP + phosphate + H2O + H(+). It participates in purine metabolism; 7-cyano-7-deazaguanine biosynthesis. Catalyzes the ATP-dependent conversion of 7-carboxy-7-deazaguanine (CDG) to 7-cyano-7-deazaguanine (preQ(0)). This Xanthomonas axonopodis pv. citri (strain 306) protein is 7-cyano-7-deazaguanine synthase.